The following is a 324-amino-acid chain: Acetyl-coenzyme A carboxylase carboxyl transferase subunit alpha (324 aa).

Positions Arg-41–Lys-291 constitute a CoA carboxyltransferase C-terminal domain.

The protein belongs to the AccA family. In terms of assembly, acetyl-CoA carboxylase is a heterohexamer composed of biotin carboxyl carrier protein (AccB), biotin carboxylase (AccC) and two subunits each of ACCase subunit alpha (AccA) and ACCase subunit beta (AccD).

It localises to the cytoplasm. It carries out the reaction N(6)-carboxybiotinyl-L-lysyl-[protein] + acetyl-CoA = N(6)-biotinyl-L-lysyl-[protein] + malonyl-CoA. The protein operates within lipid metabolism; malonyl-CoA biosynthesis; malonyl-CoA from acetyl-CoA: step 1/1. Its function is as follows. Component of the acetyl coenzyme A carboxylase (ACC) complex. First, biotin carboxylase catalyzes the carboxylation of biotin on its carrier protein (BCCP) and then the CO(2) group is transferred by the carboxyltransferase to acetyl-CoA to form malonyl-CoA. This chain is Acetyl-coenzyme A carboxylase carboxyl transferase subunit alpha, found in Chlamydia muridarum (strain MoPn / Nigg).